The chain runs to 290 residues: UPF0761 membrane protein Ent638_4092 (290 aa).

Helical transmembrane passes span 44–64 (LLSLVPLVAVIFALFAAFPMF), 104–124 (VGACGLIVTALLLMYAIDSAL), 140–160 (FAVYWMILTLGPLLAGASLAI), 183–203 (IFPLILSWLAFWLLYSIVPTL), 210–230 (AIVGALVAAILFELGKKGFAL), and 244–264 (VLAVVPILFVWVYWTWCIVLL).

Belongs to the UPF0761 family.

It localises to the cell inner membrane. This Enterobacter sp. (strain 638) protein is UPF0761 membrane protein Ent638_4092.